A 1576-amino-acid polypeptide reads, in one-letter code: DNA-directed RNA polymerase subunit beta' (1576 aa).

Positions 64, 66, 79, and 82 each coordinate Zn(2+). Residues Asp590, Asp592, and Asp594 each contribute to the Mg(2+) site. Zn(2+) contacts are provided by Cys928, Cys1002, Cys1009, and Cys1012.

The protein belongs to the RNA polymerase beta' chain family. As to quaternary structure, the RNAP catalytic core consists of 2 alpha, 1 beta, 1 beta' and 1 omega subunit. When a sigma factor is associated with the core the holoenzyme is formed, which can initiate transcription. The cofactor is Mg(2+). Requires Zn(2+) as cofactor.

It carries out the reaction RNA(n) + a ribonucleoside 5'-triphosphate = RNA(n+1) + diphosphate. Its function is as follows. DNA-dependent RNA polymerase catalyzes the transcription of DNA into RNA using the four ribonucleoside triphosphates as substrates. The protein is DNA-directed RNA polymerase subunit beta' of Aquifex pyrophilus.